Here is a 469-residue protein sequence, read N- to C-terminus: Probable NADPH:adrenodoxin oxidoreductase, mitochondrial (469 aa).

The transit peptide at 1–38 (MLSRFIKRTYSTQTSSPVVGIIGSGPAAFYTAHRLLRN) directs the protein to the mitochondrion. Ala-27, Glu-48, Leu-56, and Val-92 together coordinate FAD. NADP(+) is bound by residues 164–167 (HGNV), 208–209 (RR), and Glu-220. FAD contacts are provided by residues Trp-375 and 382 to 384 (GVI). Residue Gly-382 participates in NADP(+) binding.

It belongs to the ferredoxin--NADP reductase type 1 family. FAD serves as cofactor.

Its subcellular location is the mitochondrion inner membrane. It carries out the reaction 2 reduced [adrenodoxin] + NADP(+) + H(+) = 2 oxidized [adrenodoxin] + NADPH. Functionally, adrenodoxin reductase transfers electrons from NADPH to adrenodoxin, which is involved in heme A biosynthesis and in iron-sulfur cluster assembly. Involved in the electron transfer to heme A synthase etp1(cd), a heme protein that catalyzes the conversion of heme O to heme A. Required for the de novo synthesis of Fe-S clusters on iron sulfur cluster assembly protein isu1. Involved in electron delivery for Fe-S cluster synthesis. Essential for coenzyme Q biosynthesis. May be involved in the electron transfer required for the hydroxylation reaction performed by coq6. May play a role in cellular and mitochondrial iron homeostasis. The polypeptide is Probable NADPH:adrenodoxin oxidoreductase, mitochondrial (arh1) (Schizosaccharomyces pombe (strain 972 / ATCC 24843) (Fission yeast)).